The chain runs to 251 residues: Cytochrome P450 monooxygenase ppzG (251 aa).

Heme is bound at residue Cys250.

It belongs to the cytochrome P450 family. Requires heme as cofactor.

It participates in secondary metabolite biosynthesis. Cytochrome P450 monooxygenase; part of the gene cluster that mediates the biosynthesis of pyrrolopyrazines, secondary metabolites showing insecticidal activity. The role of ppzG within the pathway has still to be determined. The single multifunctional NRPS ppzA is sufficient to produce peramine via condensation of 1-pyrroline-5-carboxylate and arginine, N-methylation of the alpha-amino group of arginine and reduction of the thioester and the cyclization to form an iminium ion resulting in release from the peptide synthetase. Deprotonation of this intermediate and oxidation of the pyrroline ring would give rise to peramine. In Epichloe species that produce only peramine, the peramine synthetase gene is not localized in a gene cluster, in contrast to Metarhizium species that contain additional pyrrolopyrazine biosynthesis genes. The 2-oxoglutarate-Fe(II) type oxidoreductase ppzC hydroxylates peramine to yield the newly identified compound 8-hydroxyperamine whereas ppzD converts L-proline into trans-4-hydroxy-L-proline, a precursor of peramine biosynthesis. The protein is Cytochrome P450 monooxygenase ppzG of Metarhizium rileyi (strain RCEF 4871) (Nomuraea rileyi).